Here is a 217-residue protein sequence, read N- to C-terminus: Small ribosomal subunit protein uS3c (217 aa).

In terms of domain architecture, KH type-2 spans 43–117; it reads IKNYVQKNKR…KLNIAITRIA (75 aa).

It belongs to the universal ribosomal protein uS3 family. In terms of assembly, part of the 30S ribosomal subunit.

The protein localises to the plastid. Its subcellular location is the chloroplast. The protein is Small ribosomal subunit protein uS3c (rps3) of Platanus occidentalis (Sycamore).